A 388-amino-acid polypeptide reads, in one-letter code: Putative F-box/kelch-repeat protein At2g29820 (388 aa).

Residues 6–33 (EILDGPNGDDPNNNPQEGEDNQNENPQE) form a disordered region. Residues 9-21 (DGPNGDDPNNNPQ) are compositionally biased toward low complexity. Residues 22–33 (EGEDNQNENPQE) are compositionally biased toward acidic residues. Residues 38–84 (LRNLLELPEELIERLIAHIPRCYYPYISLVSRDFRQVITSDKLFRTR) enclose the F-box domain. 2 Kelch repeats span residues 140–187 (KMYV…EIGG) and 189–233 (IYVI…FSTY).

The chain is Putative F-box/kelch-repeat protein At2g29820 from Arabidopsis thaliana (Mouse-ear cress).